Reading from the N-terminus, the 306-residue chain is MADKLSVAIVGSGNISTDLLYKLLRSEWLEPRWMIGIDPESEGLARARKLGLETSHEGVDWLLARDEKPDMVFEATSAYVHRDAAPRYAEAGIRAIDLTPAAIGPGVIPPANLREHLDAPNVNMVTCGGQATIPMVHAVSRVVDVPYAEIVASVSSASAGPGTRANIDEFTKTTSAGVEVIGGARRGKAIIILNPADPPMIMRDTIFCAIPEDADHAAITQSVKDVVAEVQTYVPGYRLLNEPQFDEPSVVNGGNHLVTIFVEVEGAGDYLPPYAGNLDIMTAAAAKVGEEIARERVATSTTGAQA.

12–15 (SGNI) serves as a coordination point for NAD(+). Cysteine 127 functions as the Acyl-thioester intermediate in the catalytic mechanism. NAD(+)-binding positions include 158 to 166 (SAGPGTRAN) and asparagine 277.

Belongs to the acetaldehyde dehydrogenase family.

The catalysed reaction is acetaldehyde + NAD(+) + CoA = acetyl-CoA + NADH + H(+). This Mycolicibacterium gilvum (strain PYR-GCK) (Mycobacterium gilvum (strain PYR-GCK)) protein is Acetaldehyde dehydrogenase.